Reading from the N-terminus, the 309-residue chain is Ribosomal RNA small subunit methyltransferase H (309 aa).

Residues 44–46 (GGH), Asp-62, Phe-102, Asp-118, and Gln-125 contribute to the S-adenosyl-L-methionine site. Residues 289-309 (LEQQRNSRARSAKLRVAARSS) form a disordered region.

The protein belongs to the methyltransferase superfamily. RsmH family.

The protein localises to the cytoplasm. The catalysed reaction is cytidine(1402) in 16S rRNA + S-adenosyl-L-methionine = N(4)-methylcytidine(1402) in 16S rRNA + S-adenosyl-L-homocysteine + H(+). Specifically methylates the N4 position of cytidine in position 1402 (C1402) of 16S rRNA. The chain is Ribosomal RNA small subunit methyltransferase H from Synechococcus sp. (strain JA-3-3Ab) (Cyanobacteria bacterium Yellowstone A-Prime).